The sequence spans 270 residues: Small ribosomal subunit protein eS1 (270 aa).

Disordered regions lie at residues 1 to 21 (MAVGKNKGTSKGGKKGSKKKV) and 238 to 270 (GGGKGAEVSTGAAEGGVTIDRPEGYEPPVQESV).

It belongs to the eukaryotic ribosomal protein eS1 family. In terms of assembly, component of the small ribosomal subunit. Mature ribosomes consist of a small (40S) and a large (60S) subunit. The 40S subunit contains about 33 different proteins and 1 molecule of RNA (18S). The 60S subunit contains about 49 different proteins and 3 molecules of RNA (28S, 5.8S and 5S).

The protein localises to the cytoplasm. The sequence is that of Small ribosomal subunit protein eS1 from Aedes aegypti (Yellowfever mosquito).